The sequence spans 584 residues: Aspartate--tRNA(Asp/Asn) ligase (584 aa).

Residue glutamate 177 coordinates L-aspartate. Residues 201–204 (QLFK) are aspartate. Arginine 223 contacts L-aspartate. ATP is bound by residues 223–225 (RDE) and glutamine 232. Histidine 447 contributes to the L-aspartate binding site. Glutamate 481 lines the ATP pocket. Residue arginine 488 coordinates L-aspartate. Residue 533 to 536 (GLDR) coordinates ATP.

This sequence belongs to the class-II aminoacyl-tRNA synthetase family. Type 1 subfamily. As to quaternary structure, homodimer.

It localises to the cytoplasm. The catalysed reaction is tRNA(Asx) + L-aspartate + ATP = L-aspartyl-tRNA(Asx) + AMP + diphosphate. Its function is as follows. Aspartyl-tRNA synthetase with relaxed tRNA specificity since it is able to aspartylate not only its cognate tRNA(Asp) but also tRNA(Asn). Reaction proceeds in two steps: L-aspartate is first activated by ATP to form Asp-AMP and then transferred to the acceptor end of tRNA(Asp/Asn). The polypeptide is Aspartate--tRNA(Asp/Asn) ligase (Chlamydia caviae (strain ATCC VR-813 / DSM 19441 / 03DC25 / GPIC) (Chlamydophila caviae)).